The sequence spans 297 residues: uncharacterized protein (297 aa).

A disordered region spans residues 1 to 44; that stretch reads MQKSKSIFIPKAFAPQQQAQAPPSKLDNKDPSVEGEGASKPKDD. The span at 10–23 shows a compositional bias: low complexity; sequence PKAFAPQQQAQAPP. Residues 26-44 are compositionally biased toward basic and acidic residues; the sequence is LDNKDPSVEGEGASKPKDD.

This is an uncharacterized protein from Invertebrate iridescent virus 3 (IIV-3).